Reading from the N-terminus, the 140-residue chain is Lymphocyte antigen 6 complex locus protein G5c (140 aa).

An N-terminal signal peptide occupies residues 1 to 41; the sequence is MRFMAGPAGSQNPGPMCFHSSLQALYTVLLIVLVMMSLVFG. The 81-residue stretch at 60–140 folds into the UPAR/Ly6 domain; sequence LRCYRCLLET…SQCCFLGFLQ (81 aa). 4 cysteine pairs are disulfide-bonded: Cys-62/Cys-89, Cys-65/Cys-74, Cys-81/Cys-107, and Cys-116/Cys-133. N-linked (GlcNAc...) asparagine glycosylation is present at Asn-96.

Forms oligomers. N-glycosylated.

Its subcellular location is the secreted. Functionally, may have a role in hematopoietic cell differentiation. This is Lymphocyte antigen 6 complex locus protein G5c (LY6G5C) from Macaca mulatta (Rhesus macaque).